Reading from the N-terminus, the 133-residue chain is Small ribosomal subunit protein uS8 (133 aa).

A disordered region spans residues 1–30 (MANHDPISDMLTRIRNASEKRHETTKVPAS). Positions 16–25 (NASEKRHETT) are enriched in basic and acidic residues.

This sequence belongs to the universal ribosomal protein uS8 family. Part of the 30S ribosomal subunit. Contacts proteins S5 and S12.

One of the primary rRNA binding proteins, it binds directly to 16S rRNA central domain where it helps coordinate assembly of the platform of the 30S subunit. This is Small ribosomal subunit protein uS8 from Synechococcus sp. (strain CC9902).